We begin with the raw amino-acid sequence, 57 residues long: U13-myrmicitoxin-Mri1a (57 aa).

Positions 1–23 are cleaved as a signal peptide; sequence MKIIHVLLLVAVVAITMSPSIMA. Residues 24–29 constitute a propeptide that is removed on maturation; it reads ESVAEA. Position 56 is a glutamic acid 1-amide (Glu56).

In terms of tissue distribution, expressed by the venom gland.

The protein localises to the secreted. In terms of biological role, induces paralysis 1 hour after injection into insects (blowfly L.caesar) but does not appear to be lethal. This is U13-myrmicitoxin-Mri1a from Manica rubida (European giant red ant).